We begin with the raw amino-acid sequence, 379 residues long: Armadillo repeat-containing X-linked protein 3 (379 aa).

Residues 1–6 are Mitochondrial intermembrane-facing; sequence MGYARK. Mitochondrion outer membrane (MOM)-targeting sequence stretches follow at residues 1–6 and 26–37; these read MGYARK and RLTRGRKQNKEK. A helical; Signal-anchor membrane pass occupies residues 7-29; it reads VGWVTAGLVIGAGACYCIYRLTR. The Cytoplasmic segment spans residues 30 to 379; that stretch reads GRKQNKEKMA…AEHMFPKSQE (350 aa). Phosphoserine is present on residues serine 61, serine 67, and serine 72. The interval 89–98 is nuclear localization signal; that stretch reads RARARARARA. Residues 95–106 show a composition bias toward basic residues; that stretch reads RARATRARRAVQ. The disordered stretch occupies residues 95-116; the sequence is RARATRARRAVQKRASPNSDDT. Serine 110 carries the post-translational modification Phosphoserine. 3 ARM repeats span residues 111-151, 153-192, and 233-272; these read PNSD…NNAA, AFNR…NLSV, and VTNE…NLAE.

Belongs to the eutherian X-chromosome-specific Armcx family. In terms of assembly, interacts (via ARM domain) with MIRO1, MIRO2 and TRAK2. The interaction with Miro is calcium-dependent. Interacts with SOX10.

The protein localises to the mitochondrion outer membrane. The protein resides in the cytoplasm. It is found in the nucleus. Its function is as follows. Regulates mitochondrial aggregation and transport in axons in living neurons. May link mitochondria to the TRAK2-kinesin motor complex via its interaction with Miro and TRAK2. Mitochondrial distribution and dynamics is regulated through ARMCX3 protein degradation, which is promoted by PCK and negatively regulated by WNT1. Enhances the SOX10-mediated transactivation of the neuronal acetylcholine receptor subunit alpha-3 and beta-4 subunit gene promoters. The polypeptide is Armadillo repeat-containing X-linked protein 3 (ARMCX3) (Homo sapiens (Human)).